Consider the following 473-residue polypeptide: Glycine--tRNA ligase (473 aa).

Residues arginine 101 and glutamate 172 each contribute to the substrate site. ATP contacts are provided by residues 204 to 206 (RNE), 214 to 219 (FRTREF), 289 to 290 (EL), and 333 to 336 (GVER). Position 219 to 223 (219 to 223 (FEQME)) interacts with substrate. 329-333 (EPSVG) contacts substrate.

It belongs to the class-II aminoacyl-tRNA synthetase family. As to quaternary structure, homodimer.

It localises to the cytoplasm. The catalysed reaction is tRNA(Gly) + glycine + ATP = glycyl-tRNA(Gly) + AMP + diphosphate. Its function is as follows. Catalyzes the attachment of glycine to tRNA(Gly). In Ureaplasma urealyticum serovar 10 (strain ATCC 33699 / Western), this protein is Glycine--tRNA ligase.